Reading from the N-terminus, the 496-residue chain is Transcription termination/antitermination protein NusA (496 aa).

Residues 135–200 (GQIITGIVKK…RGAQLFISRS (66 aa)) form the S1 motif domain. The region spanning 302 to 370 (CHTMDIAVDI…KNLNINENII (69 aa)) is the KH domain. 2 tandem repeats follow at residues 364–414 (NINE…KSKL) and 440–490 (GMNA…RNIC). The tract at residues 364 to 490 (NINENIIKIL…LLIMTARNIC (127 aa)) is 2 X 51 AA approximate repeats.

This sequence belongs to the NusA family. Monomer. Binds directly to the core enzyme of the DNA-dependent RNA polymerase and to nascent RNA.

It is found in the cytoplasm. In terms of biological role, participates in both transcription termination and antitermination. This is Transcription termination/antitermination protein NusA from Buchnera aphidicola subsp. Acyrthosiphon pisum (strain APS) (Acyrthosiphon pisum symbiotic bacterium).